A 511-amino-acid polypeptide reads, in one-letter code: Lysine--tRNA ligase 2 (511 aa).

The disordered stretch occupies residues 1–22; the sequence is MTMEINNTDPFEKMPLPDDSGL. 2 residues coordinate Mg(2+): Glu-421 and Glu-428.

This sequence belongs to the class-II aminoacyl-tRNA synthetase family. In terms of assembly, homodimer. Mg(2+) serves as cofactor.

The protein resides in the cytoplasm. It catalyses the reaction tRNA(Lys) + L-lysine + ATP = L-lysyl-tRNA(Lys) + AMP + diphosphate. The sequence is that of Lysine--tRNA ligase 2 from Methanosarcina mazei (strain ATCC BAA-159 / DSM 3647 / Goe1 / Go1 / JCM 11833 / OCM 88) (Methanosarcina frisia).